We begin with the raw amino-acid sequence, 186 residues long: Protein YABBY 2 (186 aa).

The segment at 17–44 (CNFCNTIFAVSVPSNSMLNIVTVRCGHC) adopts a C4-type zinc-finger fold.

The protein belongs to the YABBY family. Expressed in leaf blades, leaf sheaths and flowers.

The protein resides in the nucleus. The polypeptide is Protein YABBY 2 (YAB2) (Oryza sativa subsp. japonica (Rice)).